Here is a 236-residue protein sequence, read N- to C-terminus: Small ribosomal subunit protein uS3 (236 aa).

Residues 39–107 (IREFLTEELK…DTSLNIVEVR (69 aa)) form the KH type-2 domain. The tract at residues 214 to 236 (ASERRAVEGDNQGSSSNRRRENA) is disordered.

Belongs to the universal ribosomal protein uS3 family. In terms of assembly, part of the 30S ribosomal subunit. Forms a tight complex with proteins S10 and S14.

In terms of biological role, binds the lower part of the 30S subunit head. Binds mRNA in the 70S ribosome, positioning it for translation. The chain is Small ribosomal subunit protein uS3 from Brucella anthropi (strain ATCC 49188 / DSM 6882 / CCUG 24695 / JCM 21032 / LMG 3331 / NBRC 15819 / NCTC 12168 / Alc 37) (Ochrobactrum anthropi).